A 1497-amino-acid polypeptide reads, in one-letter code: Collagen alpha-2(V) chain (1497 aa).

The signal sequence occupies residues 1 to 26; it reads MMANWVGARPLLILSVLLGYCVSIKA. Residues 38–96 form the VWFC domain; sequence IACTQHGQMYLNRDIWKPSPCQICVCDNGAILCDKIECPEVLNCANPITPTGECCPVCP. The segment at 103–1265 is disordered; sequence TSFGRGRKGQ…PDDTNKTDPG (1163 aa). Positions 141 to 143 match the Cell attachment site motif; it reads RGD. The span at 155–164 shows a compositional bias: low complexity; that stretch reads PQGIDGEPGV. Pro residues predominate over residues 168 to 180; it reads PGAPGPPGHPSHP. Low complexity predominate over residues 210–225; that stretch reads PGSVGPVGPRGPQGLQ. A compositionally biased stretch (pro residues) spans 234 to 246; it reads AGPPGEPGEPGPM. Proline 288, proline 291, and proline 294 each carry 4-hydroxyproline. Composition is skewed to low complexity over residues 320-338 and 425-441; these read EAGP…PRGM and TPGA…SGPP. The Cell attachment site motif lies at 504–506; sequence RGD. The span at 550 to 559 shows a compositional bias: gly residues; it reads GPKGGQGDPG. The span at 602-611 shows a compositional bias: low complexity; sequence SIGIRGQPGS. 2 positions are modified to 4-hydroxyproline: proline 609 and proline 615. A compositionally biased stretch (basic and acidic residues) spans 708–719; it reads RGERGNPGERGE. The segment covering 730–739 has biased composition (gly residues); it reads GMAGGHGPDG. The segment covering 744-756 has biased composition (low complexity); sequence PGPTGTIGDTGPP. Residues 774-785 are compositionally biased toward basic and acidic residues; that stretch reads KGDRGGIGEKGA. 2 stretches are compositionally biased toward low complexity: residues 824–839 and 878–891; these read PPGS…ENGP and LAGS…HGVP. Over residues 892–901 the composition is skewed to gly residues; sequence GLKGGRGTQG. The segment covering 917–927 has biased composition (pro residues); sequence PPGPAGAPGPA. Short sequence motifs (cell attachment site) lie at residues 942-944, 1065-1067, and 1068-1070; these read RGD. The segment covering 1061–1070 has biased composition (basic and acidic residues); it reads AVGERGDRGD. Residues 1091–1112 are compositionally biased toward low complexity; it reads APGDAGQRGEPGSRGPVGPPGR. Short sequence motifs (cell attachment site) lie at residues 1125 to 1127 and 1134 to 1136; these read RGD. A compositionally biased stretch (basic and acidic residues) spans 1125-1139; the sequence is RGDKGDNGDRGDRGQ. Composition is skewed to pro residues over residues 1169-1179 and 1209-1224; these read PFGPRGPPGPV and EGPP…PGPP. A propeptide spans 1228 to 1497 (C-terminal propeptide); the sequence is TAALGDIMGH…GLDIGPVCFM (270 aa). Residue asparagine 1260 is glycosylated (N-linked (GlcNAc...) asparagine). A Fibrillar collagen NC1 domain is found at 1264 to 1497; the sequence is PGIHVTLKSL…GLDIGPVCFM (234 aa). Disulfide bonds link cysteine 1294–cysteine 1326, cysteine 1334–cysteine 1495, and cysteine 1403–cysteine 1448. 4 residues coordinate Ca(2+): aspartate 1312, asparagine 1314, glutamine 1315, and aspartate 1320. Asparagine 1398 is a glycosylation site (N-linked (GlcNAc...) asparagine).

The protein belongs to the fibrillar collagen family. As to quaternary structure, trimers of two alpha 1(V) and one alpha 2(V) chains expressed in most tissues and trimers of one alpha 1(V), one alpha 2(V), and one alpha 3(V) chains with a more limited distribution of expression. Post-translationally, prolines at the third position of the tripeptide repeating unit (G-X-P) are hydroxylated in some or all of the chains. Probably 3-hydroxylated on prolines by LEPREL1. Hydroxylation on proline residues within the sequence motif, GXPG, is most likely to be 4-hydroxy as this fits the requirement for 4-hydroxylation in vertebrates.

Its subcellular location is the secreted. The protein resides in the extracellular space. The protein localises to the extracellular matrix. Type V collagen is a member of group I collagen (fibrillar forming collagen). It is a minor connective tissue component of nearly ubiquitous distribution. Type V collagen binds to DNA, heparan sulfate, thrombospondin, heparin, and insulin. Type V collagen is a key determinant in the assembly of tissue-specific matrices. The chain is Collagen alpha-2(V) chain from Mus musculus (Mouse).